Consider the following 286-residue polypeptide: Small ribosomal subunit protein uS2 (286 aa).

The tract at residues 257 to 286 (KDNKSNKSNTINADENIKESDLIGGSNNEG) is disordered.

This sequence belongs to the universal ribosomal protein uS2 family.

The polypeptide is Small ribosomal subunit protein uS2 (Ehrlichia ruminantium (strain Gardel)).